We begin with the raw amino-acid sequence, 75 residues long: Putative defensin-like protein 119 (75 aa).

Positions 1-25 (MAKSTIFAIFMIVFVLGMVTKETKG) are cleaved as a signal peptide. Intrachain disulfides connect Cys29–Cys73, Cys39–Cys58, Cys44–Cys67, and Cys48–Cys69.

Belongs to the DEFL family.

The protein localises to the secreted. This Arabidopsis thaliana (Mouse-ear cress) protein is Putative defensin-like protein 119 (LCR53).